The sequence spans 381 residues: Probable cyclic AMP-AMP-GMP nucleotide synthase (381 aa).

The GTP site is built by Ser53 and Arg56. Catalysis depends on residues Asp69 and Asp71. Mg(2+)-binding residues include Asp69 and Asp71. Arg109 is a binding site for GTP. The active site involves Asp121. Asp121 and Asp196 together coordinate Mg(2+). GTP is bound by residues Arg197, Arg204, Thr205, Gln210, and Arg307. The tract at residues 348–381 (GTKFPFPGPQGGDRSGGFTAPTQPAEPQKTGRFA) is disordered.

Belongs to the CD-NTase family. D02 subfamily. Mg(2+) is required as a cofactor.

It carries out the reaction GTP + 2 ATP = 3',3',3'-cAAG + 3 diphosphate. Its function is as follows. Cyclic nucleotide synthase (second messenger synthase) of a CBASS antivirus system. CBASS (cyclic oligonucleotide-based antiphage signaling system) provides immunity against bacteriophage. The CD-NTase protein synthesizes cyclic nucleotides in response to infection; these serve as specific second messenger signals. The signals activate a diverse range of effectors, leading to bacterial cell death and thus abortive phage infection. In terms of biological role, cyclic nucleotide synthase, synthesizes a tricyclic nucleotide with AMP and GMP moieties, probably 3',3',3'-cyclic AMP-AMP-GMP (3'3'3'-cAAG). Controls the activity of the associated CBASS effector protein. The polypeptide is Probable cyclic AMP-AMP-GMP nucleotide synthase (Salmonella paratyphi B (Salmonella enterica subsp. enterica serovar Paratyphi B)).